Reading from the N-terminus, the 316-residue chain is Tetrahydromethanopterin S-methyltransferase subunit H (316 aa).

The protein belongs to the MtrH family. The complex is composed of 8 subunits; MtrA, MtrB, MtrC, MtrD, MtrE, MtrF, MtrG and MtrH.

The catalysed reaction is 5-methyl-5,6,7,8-tetrahydromethanopterin + coenzyme M + 2 Na(+)(in) = 5,6,7,8-tetrahydromethanopterin + methyl-coenzyme M + 2 Na(+)(out). It functions in the pathway one-carbon metabolism; methanogenesis from CO(2); methyl-coenzyme M from 5,10-methylene-5,6,7,8-tetrahydromethanopterin: step 2/2. Part of a complex that catalyzes the formation of methyl-coenzyme M and tetrahydromethanopterin from coenzyme M and methyl-tetrahydromethanopterin. This is an energy-conserving, sodium-ion translocating step. MtrH catalyzes the transfer of the methyl group from methyl-tetrahydromethanopterin to the corrinoid prosthetic group of MtrA. This chain is Tetrahydromethanopterin S-methyltransferase subunit H, found in Methanosarcina barkeri (strain Fusaro / DSM 804).